The chain runs to 500 residues: NAD(P)H-quinone oxidoreductase chain 4, chloroplastic (500 aa).

14 helical membrane-spanning segments follow: residues 4 to 24 (FPWL…MLFL), 35 to 55 (YTIC…CYNF), 87 to 107 (IGTI…AFPV), 113 to 130 (LFHF…GSFS), 134 to 154 (LLLF…LLSM), 167 to 187 (FILY…GISL), 211 to 231 (ILFY…IPLH), 242 to 262 (HYST…YGLV), 272 to 292 (AHSM…IYAA), 305 to 325 (IAYS…SITD), 330 to 350 (GAIL…FLAG), 386 to 406 (LALP…GIIT), 416 to 436 (ILII…LLSM), and 462 to 482 (LFLS…PDFV).

Belongs to the complex I subunit 4 family.

The protein localises to the plastid. It is found in the chloroplast thylakoid membrane. The catalysed reaction is a plastoquinone + NADH + (n+1) H(+)(in) = a plastoquinol + NAD(+) + n H(+)(out). The enzyme catalyses a plastoquinone + NADPH + (n+1) H(+)(in) = a plastoquinol + NADP(+) + n H(+)(out). This Olimarabidopsis pumila (Dwarf rocket) protein is NAD(P)H-quinone oxidoreductase chain 4, chloroplastic.